Consider the following 459-residue polypeptide: uncharacterized protein (459 aa).

In terms of domain architecture, TRAM spans 5-63 (PVEEGQKFPLTIRRMGINGEGIGYFKKAVVFVPGAITGEEVVVEAVKVRDRFTEAKLNK). The [4Fe-4S] cluster site is built by Cys76, Cys82, Cys85, and Cys166. Gln290, Tyr319, Asp340, and Asp388 together coordinate S-adenosyl-L-methionine. Cys415 acts as the Nucleophile in catalysis.

It belongs to the class I-like SAM-binding methyltransferase superfamily. RNA M5U methyltransferase family.

This is an uncharacterized protein from Listeria monocytogenes serotype 4b (strain F2365).